The sequence spans 230 residues: Large ribosomal subunit protein uL4 (230 aa).

Residues 51–105 form a disordered region; sequence RAAARQGTHSTKTRGDVSGGGRKPYRQKGTGRARQGSMRAPQFTGGGIVHGPKLR.

This sequence belongs to the universal ribosomal protein uL4 family. As to quaternary structure, part of the 50S ribosomal subunit.

One of the primary rRNA binding proteins, this protein initially binds near the 5'-end of the 23S rRNA. It is important during the early stages of 50S assembly. It makes multiple contacts with different domains of the 23S rRNA in the assembled 50S subunit and ribosome. Its function is as follows. Forms part of the polypeptide exit tunnel. The protein is Large ribosomal subunit protein uL4 of Mycobacterium leprae (strain Br4923).